We begin with the raw amino-acid sequence, 493 residues long: Glutamyl-tRNA(Gln) amidotransferase subunit A (493 aa).

Residues K79 and S159 each act as charge relay system in the active site. S183 serves as the catalytic Acyl-ester intermediate.

The protein belongs to the amidase family. GatA subfamily. In terms of assembly, heterotrimer of A, B and C subunits.

It carries out the reaction L-glutamyl-tRNA(Gln) + L-glutamine + ATP + H2O = L-glutaminyl-tRNA(Gln) + L-glutamate + ADP + phosphate + H(+). Functionally, allows the formation of correctly charged Gln-tRNA(Gln) through the transamidation of misacylated Glu-tRNA(Gln) in organisms which lack glutaminyl-tRNA synthetase. The reaction takes place in the presence of glutamine and ATP through an activated gamma-phospho-Glu-tRNA(Gln). The sequence is that of Glutamyl-tRNA(Gln) amidotransferase subunit A from Rhizobium meliloti (strain 1021) (Ensifer meliloti).